Reading from the N-terminus, the 168-residue chain is MPRSRINGNFIDKTFTIVADILLRVIPTTSGEKEAFTYYRDGMSAQSEGNYAEALQNYYEAMRLEIDPYDRSYILYNIGLIHTSNGEHTKALEYYFRALERNPFLPQAFNNMAVICHYRGEQAIQQGDSEMAEAWFAQAAEYWKQAITLTPGNYIEAQNWLTITRRFE.

TPR repeat units follow at residues 35 to 68 (AFTY…EIDP), 72 to 105 (SYIL…NPFL), and 120 to 153 (GEQA…TPGN).

The protein belongs to the Ycf3 family. Interacts with Y3IP1.

The protein resides in the plastid. It localises to the chloroplast thylakoid membrane. In terms of biological role, essential for the assembly of the photosystem I (PSI) complex. May act as a chaperone-like factor to guide the assembly of the PSI subunits. This Arabidopsis thaliana (Mouse-ear cress) protein is Photosystem I assembly protein Ycf3.